The following is a 166-amino-acid chain: 3-isopropylmalate dehydratase small subunit 1 (166 aa).

The protein belongs to the LeuD family. LeuD type 2 subfamily. In terms of assembly, heterodimer of LeuC and LeuD.

The catalysed reaction is (2R,3S)-3-isopropylmalate = (2S)-2-isopropylmalate. It participates in amino-acid biosynthesis; L-leucine biosynthesis; L-leucine from 3-methyl-2-oxobutanoate: step 2/4. Catalyzes the isomerization between 2-isopropylmalate and 3-isopropylmalate, via the formation of 2-isopropylmaleate. This is 3-isopropylmalate dehydratase small subunit 1 (leuD1) from Thermotoga maritima (strain ATCC 43589 / DSM 3109 / JCM 10099 / NBRC 100826 / MSB8).